Reading from the N-terminus, the 104-residue chain is uncharacterized protein (104 aa).

A helical transmembrane segment spans residues Gly-80 to Leu-98.

The protein localises to the membrane. This is an uncharacterized protein from Saccharomyces cerevisiae (strain ATCC 204508 / S288c) (Baker's yeast).